The following is a 415-amino-acid chain: Gamma-glutamyl phosphate reductase (415 aa).

The protein belongs to the gamma-glutamyl phosphate reductase family.

Its subcellular location is the cytoplasm. It carries out the reaction L-glutamate 5-semialdehyde + phosphate + NADP(+) = L-glutamyl 5-phosphate + NADPH + H(+). It participates in amino-acid biosynthesis; L-proline biosynthesis; L-glutamate 5-semialdehyde from L-glutamate: step 2/2. Its function is as follows. Catalyzes the NADPH-dependent reduction of L-glutamate 5-phosphate into L-glutamate 5-semialdehyde and phosphate. The product spontaneously undergoes cyclization to form 1-pyrroline-5-carboxylate. This chain is Gamma-glutamyl phosphate reductase, found in Parabacteroides distasonis (strain ATCC 8503 / DSM 20701 / CIP 104284 / JCM 5825 / NCTC 11152).